A 258-amino-acid chain; its full sequence is UPF0246 protein ACIAD2218 (258 aa).

This sequence belongs to the UPF0246 family.

In Acinetobacter baylyi (strain ATCC 33305 / BD413 / ADP1), this protein is UPF0246 protein ACIAD2218.